The following is a 190-amino-acid chain: Peptidyl-tRNA hydrolase (190 aa).

F14 serves as a coordination point for tRNA. The Proton acceptor role is filled by H19. Residues M64, N66, and N112 each contribute to the tRNA site.

This sequence belongs to the PTH family. In terms of assembly, monomer.

The protein resides in the cytoplasm. It catalyses the reaction an N-acyl-L-alpha-aminoacyl-tRNA + H2O = an N-acyl-L-amino acid + a tRNA + H(+). In terms of biological role, hydrolyzes ribosome-free peptidyl-tRNAs (with 1 or more amino acids incorporated), which drop off the ribosome during protein synthesis, or as a result of ribosome stalling. Catalyzes the release of premature peptidyl moieties from peptidyl-tRNA molecules trapped in stalled 50S ribosomal subunits, and thus maintains levels of free tRNAs and 50S ribosomes. In Staphylococcus epidermidis (strain ATCC 35984 / DSM 28319 / BCRC 17069 / CCUG 31568 / BM 3577 / RP62A), this protein is Peptidyl-tRNA hydrolase.